A 433-amino-acid polypeptide reads, in one-letter code: Probable exopolygalacturonase X (433 aa).

Residues 1 to 21 (MKLTQATTLLLSLGLSLPVEG) form the signal peptide. The interval 30–54 (VGPKPPFRPLPASTPRNKTCQVQSN) is disordered. Residues 43 to 54 (TPRNKTCQVQSN) are compositionally biased toward polar residues. N-linked (GlcNAc...) asparagine glycans are attached at residues asparagine 46, asparagine 127, and asparagine 197. A PbH1 1 repeat occupies 229–250 (SSNIVIQNSVINNGDDCVSFKP). Catalysis depends on aspartate 243, which acts as the Proton donor. A disulfide bond links cysteine 245 and cysteine 262. Asparagine 251 and asparagine 263 each carry an N-linked (GlcNAc...) asparagine glycan. A PbH1 2 repeat occupies 252-272 (STEILVQNLHCNGSHGISVGS). Histidine 266 is a catalytic residue. 5 N-linked (GlcNAc...) asparagine glycosylation sites follow: asparagine 290, asparagine 295, asparagine 327, asparagine 352, and asparagine 362. One copy of the PbH1 3 repeat lies at 325–346 (VQNITYDKMYIENVDWAIEVTQ). One copy of the PbH1 4 repeat lies at 360–403 (PSNLTISDVYFNDLTGVTSGKNDPNVGTIICSSPDVCSGIHATN). Cysteines 390 and 396 form a disulfide.

This sequence belongs to the glycosyl hydrolase 28 family.

Its subcellular location is the secreted. It catalyses the reaction [(1-&gt;4)-alpha-D-galacturonosyl](n) + H2O = alpha-D-galacturonate + [(1-&gt;4)-alpha-D-galacturonosyl](n-1). Its function is as follows. Specific in hydrolyzing the terminal glycosidic bond of polygalacturonic acid and oligogalacturonates. The chain is Probable exopolygalacturonase X (pgaX) from Aspergillus flavus (strain ATCC 200026 / FGSC A1120 / IAM 13836 / NRRL 3357 / JCM 12722 / SRRC 167).